Reading from the N-terminus, the 532-residue chain is NADH-quinone oxidoreductase subunit N 2 (532 aa).

Helical transmembrane passes span 37–57 (VAPPTLTALAALAVLVADLFL), 63–83 (RLLGYAALTALAAALALLIPL), 107–127 (FTLVIQALVLGGALLTVLLSL), 133–153 (LPAGEYWFLLLASAAGAALLP), 158–178 (LATLVVALEVASLPAFALVGI), 192–212 (FFLSSVVATAVMLLGVSFVYA), 241–261 (VALTLVGFAFKTAAAPFHFWV), 276–296 (LSVVGKAVGFSGLILVTVVAF), 302–322 (VWGPALAVLAALTMTAGNVAA), 336–356 (LLAWSSVAQAGYLLVPIAAAA), 367–387 (VAYALMYAVVNLGAFAVAAVV), 411–431 (LALGFFLLCLAGLPPGIIGLF), 444–464 (GLGWLAVVMAVNVVIALYYYL), and 504–524 (TAIVLTATAGILLSGVPQTVL).

It belongs to the complex I subunit 2 family. As to quaternary structure, NDH-1 is composed of 14 different subunits. Subunits NuoA, H, J, K, L, M, N constitute the membrane sector of the complex.

The protein resides in the cell membrane. It catalyses the reaction a quinone + NADH + 5 H(+)(in) = a quinol + NAD(+) + 4 H(+)(out). NDH-1 shuttles electrons from NADH, via FMN and iron-sulfur (Fe-S) centers, to quinones in the respiratory chain. The immediate electron acceptor for the enzyme in this species is believed to be a menaquinone. Couples the redox reaction to proton translocation (for every two electrons transferred, four hydrogen ions are translocated across the cytoplasmic membrane), and thus conserves the redox energy in a proton gradient. This chain is NADH-quinone oxidoreductase subunit N 2, found in Streptomyces griseus subsp. griseus (strain JCM 4626 / CBS 651.72 / NBRC 13350 / KCC S-0626 / ISP 5235).